The primary structure comprises 199 residues: Acireductone dioxygenase 2 (199 aa).

Positions 98, 100, 104, and 143 each coordinate Fe(2+). 4 residues coordinate Ni(2+): His98, His100, Glu104, and His143.

Belongs to the acireductone dioxygenase (ARD) family. The cofactor is Fe(2+). Ni(2+) serves as cofactor.

It is found in the cytoplasm. The protein localises to the nucleus. The enzyme catalyses 1,2-dihydroxy-5-(methylsulfanyl)pent-1-en-3-one + O2 = 4-methylsulfanyl-2-oxobutanoate + formate + 2 H(+). The catalysed reaction is 1,2-dihydroxy-5-(methylsulfanyl)pent-1-en-3-one + O2 = 3-(methylsulfanyl)propanoate + CO + formate + 2 H(+). Its pathway is amino-acid biosynthesis; L-methionine biosynthesis via salvage pathway; L-methionine from S-methyl-5-thio-alpha-D-ribose 1-phosphate: step 5/6. Functionally, catalyzes 2 different reactions between oxygen and the acireductone 1,2-dihydroxy-3-keto-5-methylthiopentene (DHK-MTPene) depending upon the metal bound in the active site. Fe-containing acireductone dioxygenase (Fe-ARD) produces formate and 2-keto-4-methylthiobutyrate (KMTB), the alpha-ketoacid precursor of methionine in the methionine recycle pathway. Ni-containing acireductone dioxygenase (Ni-ARD) produces methylthiopropionate, carbon monoxide and formate, and does not lie on the methionine recycle pathway. The protein is Acireductone dioxygenase 2 of Vitis vinifera (Grape).